A 707-amino-acid chain; its full sequence is Ribosomal RNA large subunit methyltransferase K/L (707 aa).

The THUMP domain occupies valine 44 to leucine 155.

Belongs to the methyltransferase superfamily. RlmKL family.

Its subcellular location is the cytoplasm. The catalysed reaction is guanosine(2445) in 23S rRNA + S-adenosyl-L-methionine = N(2)-methylguanosine(2445) in 23S rRNA + S-adenosyl-L-homocysteine + H(+). It carries out the reaction guanosine(2069) in 23S rRNA + S-adenosyl-L-methionine = N(2)-methylguanosine(2069) in 23S rRNA + S-adenosyl-L-homocysteine + H(+). Specifically methylates the guanine in position 2445 (m2G2445) and the guanine in position 2069 (m7G2069) of 23S rRNA. This Legionella pneumophila (strain Lens) protein is Ribosomal RNA large subunit methyltransferase K/L.